The sequence spans 311 residues: Heme A synthase (311 aa).

Residues 1 to 6 (MQRFIK) are Cytoplasmic-facing. The helical transmembrane segment at 7-27 (WLAVITSLDLLIVLLGGALVT) threads the bilayer. The Extracellular segment spans residues 28 to 62 (KTGSGQGCGKSWPLCNGEFVPSNLSMETIIELSHR). Cysteines 35 and 42 form a disulfide. Residue E58 is part of the active site. Residue H61 coordinates heme o. The helical transmembrane segment at 63 to 83 (LTSGSAGILVTLLCILSWKYY) threads the bilayer. At 84-91 (KHVRETKT) the chain is on the cytoplasmic side. A helical membrane pass occupies residues 92 to 112 (LAILSFVFLVAQALMGAAAVV). Over 113–121 (WGQMPAVLA) the chain is Extracellular. Residues 122 to 142 (IHFGISLISFASVILLTCLIF) form a helical membrane-spanning segment. H123 is a binding site for heme o. Residues 143-159 (EIDQKFDARSLIMDKKM) lie on the Cytoplasmic side of the membrane. A helical membrane pass occupies residues 160 to 180 (KFHIYGVTIYSYIVVYTGALV). At 181 to 211 (RHERASLACPDFPLCSKNRPMPTQLHEWVQM) the chain is on the extracellular side. C189 and C195 are disulfide-bonded. Residues 212–232 (GHRVAAMLIFAWILYAMILAI) traverse the membrane as a helical segment. Heme b is bound at residue H213. The Cytoplasmic segment spans residues 233–243 (RHYKQQPVVYW). Residues 244–264 (GWIISFILVTLQAIVGILVVF) traverse the membrane as a helical segment. Topologically, residues 265–271 (TNASLSM) are extracellular. Residues 272–292 (ALLHSLFISCLFAVLCYLVML) form a helical membrane-spanning segment. H275 serves as a coordination point for heme b. Topologically, residues 293 to 311 (GTRSKVNAKEAASTSKQTK) are cytoplasmic.

The protein belongs to the COX15/CtaA family. Type 1 subfamily. In terms of assembly, interacts with CtaB. Requires heme b as cofactor.

It is found in the cell membrane. It carries out the reaction Fe(II)-heme o + 2 A + H2O = Fe(II)-heme a + 2 AH2. The protein operates within porphyrin-containing compound metabolism; heme A biosynthesis; heme A from heme O: step 1/1. Functionally, catalyzes the conversion of heme O to heme A by two successive hydroxylations of the methyl group at C8. The first hydroxylation forms heme I, the second hydroxylation results in an unstable dihydroxymethyl group, which spontaneously dehydrates, resulting in the formyl group of heme A. The chain is Heme A synthase from Bacillus cereus (strain ATCC 10987 / NRS 248).